A 254-amino-acid chain; its full sequence is MWDPNKYLAFADHRGRPFYELLSRVDARSPRRVVDLGCGPGNLTVSLAERWPDAVLEASDSSPEMVEAARERGLDAGRQDVRDWTPKPDTDVVVSNAALQWVPEHRELLRRWPTQLPSGAWIAVQVPGNFDAPSHTIVRDLASRERWSRSLPDVPFRASTVVDDPADYAGLLADAGCAVDAWETTYVQRLTGENPVLEWITGTALRPVKDALSAPEWDLFREELAPLLDEAYPRRPDGSTFFPFRRIFVVAQVQ.

The protein belongs to the methyltransferase superfamily. Tam family.

It is found in the cytoplasm. The catalysed reaction is trans-aconitate + S-adenosyl-L-methionine = (E)-3-(methoxycarbonyl)pent-2-enedioate + S-adenosyl-L-homocysteine. Functionally, catalyzes the S-adenosylmethionine monomethyl esterification of trans-aconitate. The sequence is that of Trans-aconitate 2-methyltransferase from Rhodococcus jostii (strain RHA1).